The following is a 687-amino-acid chain: MGQEKLYTEKELSWLSFNERVLQEAADKSNPLIERMRFLGIYSNNLDEFYKVRFADLKRRILINEEQGSAVTSRHLLKKIQSKVVKADQEFDGLYNDLLLEMARNQIFLVNERQISENQQTWLKQYFKQHLRQHITPILINHDTNLVQFLKDDYTYLAVEIIRGQDIAYALLEIPSDKIPRFVNLPPEAPRRRKPMILLDNILRFCLDEIFKGFFDYDALNAYSMKMTRDAEYDLVTEMESSLLELMSSSLKQRLTAEPVRFVYQRDMPDEMVELLRNKLGISNDDSVIAGGRYHNFKDFINFPNVGKSNLVNRPMPRLRHVWFDKFRNGFDAIREQDVLLYYPYHTFEHVLELLRQASFDPSVLAIKINIYRVAKDSRIIDSMIHAAHNGKKVTVVVELQARFDEEANIHWAKSLTAAGVHVIFSAPGLKIHAKLFLISRLENDEIVRYAHIGTGNFNEKTARIYTDYSLLTADARITNEVRRVFNFIENPYRPVTFDNLMVSPQNSRLILYQLIDQEIIHAQAGESAGITLKINNLVDKGLVDRLYSASSAGVKIRLLVRGMCSLIPNMPGISDNIQVTSIVDRFLEHDRVYVFENKGDKLVYLSSADWMTRNIDYRIEVAVSLLDPKLKQRVLDILEILFNDTVKARYIDKELSNRYVPRGNRRKVRAQIAIYDYLKALEQPEQ.

Residue N45 participates in ATP binding. Residues R373 and R403 each coordinate Mg(2+). The Phosphohistidine intermediate role is filled by H433. ATP contacts are provided by Y466, R562, and H590. The region spanning D585–N615 is the PLD phosphodiesterase domain.

Belongs to the polyphosphate kinase 1 (PPK1) family. Mg(2+) serves as cofactor. Post-translationally, an intermediate of this reaction is the autophosphorylated ppk in which a phosphate is covalently linked to a histidine residue through a N-P bond.

It catalyses the reaction [phosphate](n) + ATP = [phosphate](n+1) + ADP. Functionally, catalyzes the reversible transfer of the terminal phosphate of ATP to form a long-chain polyphosphate (polyP). The chain is Polyphosphate kinase from Yersinia pestis.